The primary structure comprises 431 residues: MDSSEQLRAEDNQSVVSRMQKNYWRTKQVFIKATGKKEDEHVVASDAELDAKLEVFHSIQETCNELVKIVEKYQLRLNVISEEENELGLFLKFQAERDSTQAGEMMDAAGKALCSSAKQRLALCTPLSRLKQEVATFSQRAISDTLVTINRMERARTEYRGALLWMKDASQELDPDTFKQMEKFRKVQNQVRNSKDSFDKLKKDVCQKVDLLGASRCNMLSHSLTTYQRTLLGFWEKTAQMMTQIQEACAGFHPYDFLALKRLQDTPGNLTADCTEGQTEGSCLTTDLNKVALSEEEEEERFEREPAVARALPRDSLEGDDFEKEFSFLNSLLSPTSSSASEFTQECQPACGSPCTGLTSQEPSVGPGSLTSSSQFLPSQLFDLGLHADGAFNTPNNGNQDMSAWFNLFADLGPLSNPDAIGHSDDELLNA.

One can recognise an AH domain in the interval 44-247 (ASDAELDAKL…TAQMMTQIQE (204 aa)). 2 disordered regions span residues 295–316 (EEEE…PRDS) and 351–372 (CGSP…SLTS). The segment covering 301-316 (RFEREPAVARALPRDS) has biased composition (basic and acidic residues). Polar residues predominate over residues 356 to 372 (TGLTSQEPSVGPGSLTS).

This Mus musculus (Mouse) protein is Islet cell autoantigen 1-like protein (Ica1l).